The sequence spans 323 residues: tRNA U34 carboxymethyltransferase (323 aa).

Residues Lys91, Trp105, Lys110, Gly130, 181–182 (IE), Met196, Tyr200, and Arg315 each bind carboxy-S-adenosyl-L-methionine.

The protein belongs to the class I-like SAM-binding methyltransferase superfamily. CmoB family. Homotetramer.

It catalyses the reaction carboxy-S-adenosyl-L-methionine + 5-hydroxyuridine(34) in tRNA = 5-carboxymethoxyuridine(34) in tRNA + S-adenosyl-L-homocysteine + H(+). Catalyzes carboxymethyl transfer from carboxy-S-adenosyl-L-methionine (Cx-SAM) to 5-hydroxyuridine (ho5U) to form 5-carboxymethoxyuridine (cmo5U) at position 34 in tRNAs. The sequence is that of tRNA U34 carboxymethyltransferase from Edwardsiella ictaluri (strain 93-146).